The sequence spans 245 residues: Nucleoprotein (245 aa).

RNA contacts are provided by Y30, K67, R106, R186, and S196.

The protein belongs to the phlebovirus nucleocapsid protein family. In terms of assembly, homodimer. Homohexamer; ring-shaped, necessary to form the nucleocapsid. Homopentamers; opened pentamers in solution. Binds to viral genomic RNA. Interacts with glycoprotein Gn; this interaction allows packaging of nucleocapsids into virions.

It localises to the virion. It is found in the host cytoplasm. Its subcellular location is the host nucleus. The protein resides in the host endoplasmic reticulum-Golgi intermediate compartment. The protein localises to the host Golgi apparatus. Its function is as follows. Encapsidates the genomic RNA, protecting it from nucleases. Displays high affinity for single-stranded nucleic acid. The encapsidated genomic RNA is termed the nucleocapsid (NC) or ribonucleoprotein. The ribonucleoprotein has a non-helical structure. Serves as template for viral transcription and replication. After replication, the nucleocapsid is recruited to the host Golgi apparatus by glycoprotein Gn for packaging into virus particles. The sequence is that of Nucleoprotein (NP) from Dabie bandavirus (Severe fever with thrombocytopenia virus).